Here is a 397-residue protein sequence, read N- to C-terminus: Proteinase-activated receptor 2 (397 aa).

Positions 1–25 (MRSLSLAWLLGGITLLAASASCNRT) are cleaved as a signal peptide. Residue asparagine 23 is glycosylated (N-linked (GlcNAc...) asparagine). A propeptide spans 26–36 (VNAPGPNSKGR) (removed for receptor activation). The Extracellular segment spans residues 37–71 (SLIGRLDTPPPITGKGAPVEPGFSVDEFSASVLTG). The helical transmembrane segment at 72 to 101 (KLTTVFLPVIYIIVFVIGLPSNGMALWVFF) threads the bilayer. At 102–108 (FRTKKKH) the chain is on the cytoplasmic side. A helical transmembrane segment spans residues 109-137 (PAVIYMANLALADLLSVIWFPLKISYHLH). At 138-149 (GNDWTYGDALCK) the chain is on the extracellular side. A disulfide bridge connects residues cysteine 148 and cysteine 226. Residues 150–177 (VLIGFFYGNMYCSILFMTCLSVQRYWVI) form a helical membrane-spanning segment. Residues 178–183 (VNPMGH) lie on the Cytoplasmic side of the membrane. Residues 184–211 (SRKRANIAVGVSLAIWLLIFLVTIPLYV) form a helical membrane-spanning segment. The Extracellular portion of the chain corresponds to 212–235 (MRQTIYIPALNITTCHDVLPEEVL). N-linked (GlcNAc...) asparagine glycosylation is present at asparagine 222. The chain crosses the membrane as a helical span at residues 236-269 (VGDMFSYFLSLAIGVFLFPALLTASAYVLMIKTL). Residues 270-277 (RSSAMDEH) lie on the Cytoplasmic side of the membrane. Residues 278–317 (SEKKRRRAIRLIITVLSMYFICFAPSNVLLVVHYFLIKSQ) traverse the membrane as a helical segment. The Extracellular segment spans residues 318–323 (RQSHVY). A helical transmembrane segment spans residues 324-347 (ALYLVALCLSTLNSCIDPFVYYFV). At 348-397 (SKDFRDQARNALLCRSVRTVKRMQISLTSNKFSRKSSSYSSSSTSVKTSY) the chain is on the cytoplasmic side. Cysteine 361 carries S-palmitoyl cysteine lipidation.

Belongs to the G-protein coupled receptor 1 family. As to quaternary structure, interacts with TLR4, COPS5 and TMED2. Interacts with GNAQ, GNA11, GNA12, GNA13 and GNA14. In terms of processing, a proteolytic cleavage generates a new N-terminus that functions as a tethered ligand. Activating serine proteases include trypsin, mast cell tryptase, coagulation factors VII and Xa, myeloblastin/PRTN3 and membrane-type serine protease 1/ST14. Proposed subsequent cleavage by serine proteases is leading to receptor deactivation and include neutrophil elastase and cathepsin G. At least in part, implicated proteases are also shown to activate the receptor; the glycosylation status of the receptor is thought to contribute to the difference. N-glycosylated and sialylated. Post-translationally, multiple phosphorylated on serine and threonine residues in the cytoplasmic region upon receptor activation; required for receptor desensitization and recruitment of beta-arrestin. In terms of processing, monoubiquitinated by Cbl at the plasma membrane and in early endosomes; not required for receptor endocytosis but for translocation to late endosomes or lysosomes. Deubiquitination involves Stambp and Usp8; required for lysosomal trafficking and receptor degradation.

It localises to the cell membrane. In terms of biological role, receptor for trypsin and trypsin-like enzymes coupled to G proteins. Its function is mediated through the activation of several signaling pathways including phospholipase C (PLC), intracellular calcium, mitogen-activated protein kinase (MAPK), I-kappaB kinase/NF-kappaB and Rho. Can also be transactivated by cleaved F2R/PAR1. Involved in modulation of inflammatory responses and regulation of innate and adaptive immunity, and acts as a sensor for proteolytic enzymes generated during infection. Generally is promoting inflammation. Can signal synergistically with TLR4 and probably TLR2 in inflammatory responses and modulates Tlr3 signaling. Has a protective role in establishing the endothelial barrier; the activity involves coagulation factor X. Regulates endothelial cell barrier integrity during neutrophil extravasation, probably following proteolytic cleavage by PRTN3. Proposed to have a bronchoprotective role in airway epithelium, but also shown to compromise the airway epithelial barrier by interrupting E-cadherin adhesion. Involved in the regulation of vascular tone; activation results in hypotension presumably mediated by vasodilation. Associates with a subset of G proteins alpha subunits such as GNAQ, GNA11, GNA14, GNA12 and GNA13, but probably not with G(o)-alpha, G(i) subunit alpha-1 and G(i) subunit alpha-2. Believed to be a class B receptor which internalizes as a complex with arrestin and traffic with it to endosomal vesicles, presumably as desensitized receptor, for extended periods of time. Mediates inhibition of TNF-alpha stimulated JNK phosphorylation via coupling to G GNAQ and GNA11; the function involves dissociation of RIPK1 and Tradd from TNFR1. Mediates phosphorylation of nuclear factor NF-kappa-B RELA subunit at 'Ser-536'; the function involves Ikbkb and is predominantly independent of G proteins. Involved in cellular migration. Involved in cytoskeletal rearrangement and chemotaxis through beta-arrestin-promoted scaffolds; the function is independent of GNAQ and GNA11 and involves promotion of cofilin dephosphorylation and actin filament severing. Induces redistribution of COPS5 from the plasma membrane to the cytosol and activation of the JNK cascade is mediated by Cops5. Involved in the recruitment of leukocytes to the sites of inflammation and is the major PAR receptor capable of modulating eosinophil function such as pro-inflammatory cytokine secretion, superoxide production and degranulation. During inflammation promotes dendritic cell maturation, trafficking to the lymph nodes and subsequent T-cell activation. Involved in antimicrobial response of innate immune cells; activation enhances phagocytosis of Gram-positive and killing of Gram-negative bacteria. Acts synergistically with interferon-gamma in enhancing antiviral responses. Probably mediates activation of pro-inflammatory and pro-fibrotic responses in fibroblasts, triggered by coagulation factor Xa (F10). Probably mediates activation of barrier protective signaling responses in endothelial cells, triggered by coagulation factor Xa (F10). The protein is Proteinase-activated receptor 2 (F2rl1) of Rattus norvegicus (Rat).